The primary structure comprises 289 residues: ATP synthase gamma chain (289 aa).

This sequence belongs to the ATPase gamma chain family. F-type ATPases have 2 components, CF(1) - the catalytic core - and CF(0) - the membrane proton channel. CF(1) has five subunits: alpha(3), beta(3), gamma(1), delta(1), epsilon(1). CF(0) has three main subunits: a, b and c.

The protein localises to the cell inner membrane. Functionally, produces ATP from ADP in the presence of a proton gradient across the membrane. The gamma chain is believed to be important in regulating ATPase activity and the flow of protons through the CF(0) complex. In Dichelobacter nodosus (strain VCS1703A), this protein is ATP synthase gamma chain.